A 289-amino-acid polypeptide reads, in one-letter code: Glycine--tRNA ligase alpha subunit (289 aa).

Belongs to the class-II aminoacyl-tRNA synthetase family. As to quaternary structure, tetramer of two alpha and two beta subunits.

The protein localises to the cytoplasm. The enzyme catalyses tRNA(Gly) + glycine + ATP = glycyl-tRNA(Gly) + AMP + diphosphate. This is Glycine--tRNA ligase alpha subunit (glyQ) from Rickettsia prowazekii (strain Madrid E).